The following is a 256-amino-acid chain: Type III pantothenate kinase (256 aa).

7 to 14 (DIGNTNVV) serves as a coordination point for ATP. Residue 108–111 (GADC) participates in substrate binding. Aspartate 110 (proton acceptor) is an active-site residue. Residue aspartate 130 coordinates K(+). Threonine 133 is a binding site for ATP. Threonine 185 is a substrate binding site.

The protein belongs to the type III pantothenate kinase family. In terms of assembly, homodimer. Requires NH4(+) as cofactor. It depends on K(+) as a cofactor.

It localises to the cytoplasm. The enzyme catalyses (R)-pantothenate + ATP = (R)-4'-phosphopantothenate + ADP + H(+). It participates in cofactor biosynthesis; coenzyme A biosynthesis; CoA from (R)-pantothenate: step 1/5. Its function is as follows. Catalyzes the phosphorylation of pantothenate (Pan), the first step in CoA biosynthesis. The chain is Type III pantothenate kinase from Bifidobacterium adolescentis (strain ATCC 15703 / DSM 20083 / NCTC 11814 / E194a).